We begin with the raw amino-acid sequence, 349 residues long: Small ribosomal subunit biogenesis GTPase RsgA (349 aa).

Basic residues predominate over residues 1-11 (MSKKKLSKGQQ). The interval 1–35 (MSKKKLSKGQQRRVSANHQRRLKHADSKVEWDDSQ) is disordered. In terms of domain architecture, CP-type G spans 111 to 272 (YDGLKPIAAN…VIDSPGVREF (162 aa)). GTP-binding positions include 158–161 (NKID) and 212–220 (GQSGVGKSS). Zn(2+)-binding residues include cysteine 296, cysteine 301, histidine 303, and cysteine 309.

It belongs to the TRAFAC class YlqF/YawG GTPase family. RsgA subfamily. In terms of assembly, monomer. Associates with 30S ribosomal subunit, binds 16S rRNA. It depends on Zn(2+) as a cofactor.

Its subcellular location is the cytoplasm. Functionally, one of several proteins that assist in the late maturation steps of the functional core of the 30S ribosomal subunit. Helps release RbfA from mature subunits. May play a role in the assembly of ribosomal proteins into the subunit. Circularly permuted GTPase that catalyzes slow GTP hydrolysis, GTPase activity is stimulated by the 30S ribosomal subunit. The chain is Small ribosomal subunit biogenesis GTPase RsgA from Dickeya dadantii (strain 3937) (Erwinia chrysanthemi (strain 3937)).